Here is a 1434-residue protein sequence, read N- to C-terminus: Ankyrin and armadillo repeat-containing protein (1434 aa).

The chain crosses the membrane as a helical span at residues 309–329 (IRRGIGYLKLICFLIPFLLSL). ANK repeat units lie at residues 532–561 (AGYT…KVNQ), 569–598 (QGPT…DYTL), 602–631 (RGWM…SLLE), 638–667 (NQCT…NWRK), and 671–701 (KGNN…ELPV). ARM repeat units lie at residues 732–771 (DQYW…NIST), 773–812 (KSAV…DIAQ), 814–852 (ENKD…VLCI), 855–894 (ENNQ…EVGR), 897–936 (KEIQ…SLAS), and 1072–1112 (PVSQ…CIVL).

As to expression, ubiquitously expressed with highest level in pancreas and lowest in skeletal muscle.

It localises to the membrane. This Homo sapiens (Human) protein is Ankyrin and armadillo repeat-containing protein (ANKAR).